The primary structure comprises 165 residues: UPF0303 protein BTH_I2506 (165 aa).

The protein belongs to the UPF0303 family.

The chain is UPF0303 protein BTH_I2506 from Burkholderia thailandensis (strain ATCC 700388 / DSM 13276 / CCUG 48851 / CIP 106301 / E264).